Reading from the N-terminus, the 350-residue chain is tRNA pseudouridine synthase D (350 aa).

Phe27 lines the substrate pocket. The active-site Nucleophile is Asp80. Residue Asn129 coordinates substrate. A TRUD domain is found at 155 to 303 (GVPNYFGVQR…VDTTRRAINL (149 aa)). Phe329 lines the substrate pocket.

The protein belongs to the pseudouridine synthase TruD family.

It catalyses the reaction uridine(13) in tRNA = pseudouridine(13) in tRNA. Responsible for synthesis of pseudouridine from uracil-13 in transfer RNAs. This chain is tRNA pseudouridine synthase D, found in Proteus mirabilis (strain HI4320).